A 617-amino-acid chain; its full sequence is V-type proton ATPase catalytic subunit A (617 aa).

At threonine 136 the chain carries Phosphothreonine. Residue 250–257 (GAFGCGKT) coordinates ATP. Serine 384 bears the Phosphoserine; by AMPK mark.

It belongs to the ATPase alpha/beta chains family. V-ATPase is a heteromultimeric enzyme made up of two complexes: the ATP-hydrolytic V1 complex and the proton translocation V0 complex. The V1 complex consists of three catalytic AB heterodimers that form a heterohexamer, three peripheral stalks each consisting of EG heterodimers, one central rotor including subunits D and F, and the regulatory subunits C and H. The proton translocation complex V0 consists of the proton transport subunit a, a ring of proteolipid subunits c9c'', rotary subunit d, subunits e and f, and the accessory subunits ATP6AP1/Ac45 and ATP6AP2/PRR. Interacts with the V0 complex V-ATPase subunit a4 ATP6V0A4. Interacts with WFS1. Interacts with alpha-crystallin B chain/CRYAB and with MTOR, forming a ternary complex. In terms of processing, phosphorylation at Ser-384 by AMPK down-regulates its enzyme activity. In terms of tissue distribution, expressed in brain (at protein level).

Its subcellular location is the cytoplasm. The protein resides in the cytosol. It is found in the cytoplasmic vesicle. It localises to the secretory vesicle. The protein localises to the clathrin-coated vesicle membrane. Its subcellular location is the lysosome. It carries out the reaction ATP + H2O + 4 H(+)(in) = ADP + phosphate + 5 H(+)(out). Its activity is regulated as follows. ATP hydrolysis occurs at the interface between the nucleotide-binding domains of subunits A and B. ATP hydrolysis triggers a conformational change in the subunits D and F, which induces a shift of subunit d. The c-ring is subsequently rotated and results in a continuous proton translocation across the membrane. The V-ATPase is inhibited by bafilomycin A. Catalytic subunit of the V1 complex of vacuolar(H+)-ATPase (V-ATPase), a multisubunit enzyme composed of a peripheral complex (V1) that hydrolyzes ATP and a membrane integral complex (V0) that translocates protons. V-ATPase is responsible for acidifying and maintaining the pH of intracellular compartments and in some cell types, is targeted to the plasma membrane, where it is responsible for acidifying the extracellular environment. In aerobic conditions, involved in intracellular iron homeostasis, thus triggering the activity of Fe(2+) prolyl hydroxylase (PHD) enzymes, and leading to HIF1A hydroxylation and subsequent proteasomal degradation. May play a role in neurite development and synaptic connectivity. This Bos taurus (Bovine) protein is V-type proton ATPase catalytic subunit A (ATP6V1A).